Here is a 93-residue protein sequence, read N- to C-terminus: Progonadoliberin-2 (93 aa).

Residues 1-24 (MACQRHLLFLLLVLFAVSTQLSHG) form the signal peptide. Glutamine 25 bears the Pyrrolidone carboxylic acid mark. Residue glycine 34 is modified to Glycine amide.

This sequence belongs to the GnRH family. As to expression, midbrain and hindbrain.

It localises to the secreted. Its function is as follows. Stimulates the secretion of gonadotropins. The sequence is that of Progonadoliberin-2 (gnrh2) from Aquarana catesbeiana (American bullfrog).